Reading from the N-terminus, the 299-residue chain is tRNA-cytidine(32) 2-sulfurtransferase (299 aa).

Positions 56–61 (SGGKDS) match the PP-loop motif motif. Positions 131, 134, and 222 each coordinate [4Fe-4S] cluster.

Belongs to the TtcA family. As to quaternary structure, homodimer. It depends on Mg(2+) as a cofactor. The cofactor is [4Fe-4S] cluster.

Its subcellular location is the cytoplasm. It catalyses the reaction cytidine(32) in tRNA + S-sulfanyl-L-cysteinyl-[cysteine desulfurase] + AH2 + ATP = 2-thiocytidine(32) in tRNA + L-cysteinyl-[cysteine desulfurase] + A + AMP + diphosphate + H(+). The protein operates within tRNA modification. In terms of biological role, catalyzes the ATP-dependent 2-thiolation of cytidine in position 32 of tRNA, to form 2-thiocytidine (s(2)C32). The sulfur atoms are provided by the cysteine/cysteine desulfurase (IscS) system. The chain is tRNA-cytidine(32) 2-sulfurtransferase from Xylella fastidiosa (strain 9a5c).